A 1299-amino-acid chain; its full sequence is MSSESSFGLMQIGLATAEDIRGWSYGEVKKPETINYRTLKPEKDGLFCEKIFGPSRDWECYCGKYKRVRFKGIICERCGVEVTRAKVRRERMGHIELAAPVTHIWYFKGVPSRLGYLLDLAPKDLEKVIYFAAYMITSVDTESRHAELPNLQVEHDLEKKQMVDNRDSDIATIARDLEDELARLEGEGAKAADKKKARDSADRQMANVRKRADADIERLEQVWDRFKNLKVADLEGDEGLYRELRDRYGLYFEGSMGAEAIKKRLETFDMQAEAESLRDTIQNGKGQRKTRALKRLKVVNAFLTTNNSPLGMVLDAVPVIPPELRPMVQLDGGRFATSDLNDLYRRVINRNNRLKRLLDLGAPEIIVNNEKRMLQEAVDSLFDNGRRGRPVTGPGNRPLKSLSDMLKGKQGRFRQNLLGKRVDYSGRSVIVVGPQLKLHQCGLPKQMALELFKPFVMKRLVDLNHAQNIKSAKRMVERYRPQVWDVLEEIITEHPVLLNRAPTLHRLGIQAFEPQLVEGKAIQLHPLVCGAFNADFDGDQMAVHLPLSPEAQAEARILMLSSNNILKPSDGRPVTLPSQDMIIGLYHLTTKRVGSAGEGRIFSSVSEAIMAYDARDLHLNSQVKIRLDDFVPYAGWEAPEGWEPGQPALVETSLGQVIFNQTLPEDYPWVEAVADKGELSRIVNDLAERYPKVVTAATLDNLKDAGFYWATRSGVTVAISDIEVPTSKPAILAGYENMAAKIQGQYDKGLIDDDERRQELIEIWNKATNEIAQAMRDSLSPMNTINRMVSSGARGNWMQVRQIAGIRGLVANPKGEIIPRPIKSSYREGLSVLEYFIATHGARKGLADTALRTANSGYLTRRLVDVSQDVIVREEDCGTERGLVTPIAVPDSNGELVLDENVENSAYARTLAVDVVDAQGNVLAAGGTDCGDVVIDQLLAAGITEVKVRSVLTCESKVGTCALCYGRSLATGKTVDIGEAVGIIAAQSIGEPGTQLTMRTFHTGGAVSAGGGDDITQGLPRIQELFEARTPKGVAPIAEAAGRITIEESERQMRLVITPDDGSEEIAYPVLRRSRLLIEDGEHVSVGQKLINGPVDPKQVLRIMGPRAAQKFLVDEVQGVYRSQGIGIHDKHVEVIVRQMLRRVTVIESGDSDLLPGELAERARFEDENRRVVSEGKAPASGRPELMGITKASLATESWLSAASFQETTRVLTQAAMEGKSDPLLGLKENVIIGKLIPAGTGLPRYTEVTVEPTEEAKASLFTGPSAFTDFSYDALGGDGAPEFHAIPLDDYDLGNDFR.

C60, C62, C75, and C78 together coordinate Zn(2+). 3 residues coordinate Mg(2+): D535, D537, and D539. Residues C877, C954, C961, and C964 each contribute to the Zn(2+) site.

It belongs to the RNA polymerase beta' chain family. In terms of assembly, the RNAP catalytic core consists of 2 alpha, 1 beta, 1 beta' and 1 omega subunit. When a sigma factor is associated with the core the holoenzyme is formed, which can initiate transcription. Requires Mg(2+) as cofactor. It depends on Zn(2+) as a cofactor.

The catalysed reaction is RNA(n) + a ribonucleoside 5'-triphosphate = RNA(n+1) + diphosphate. Functionally, DNA-dependent RNA polymerase catalyzes the transcription of DNA into RNA using the four ribonucleoside triphosphates as substrates. This is DNA-directed RNA polymerase subunit beta' from Paenarthrobacter aurescens (strain TC1).